A 375-amino-acid polypeptide reads, in one-letter code: All-trans-retinol dehydrogenase [NAD(+)] ADH1B (375 aa).

The residue at position 2 (serine 2) is an N-acetylserine. At serine 23 the chain carries Phosphoserine. Position 35 is a phosphotyrosine (tyrosine 35). Zn(2+) is bound by residues cysteine 47, histidine 68, cysteine 98, cysteine 101, cysteine 104, cysteine 112, and cysteine 175. NAD(+)-binding positions include glycine 200–glycine 205, aspartate 224, lysine 229, valine 293–valine 295, and arginine 370.

The protein belongs to the zinc-containing alcohol dehydrogenase family. Homodimer or heterodimer of closely related subunits. It depends on Zn(2+) as a cofactor.

Its subcellular location is the cytoplasm. The catalysed reaction is all-trans-retinol + NAD(+) = all-trans-retinal + NADH + H(+). It carries out the reaction all-trans-4-hydroxyretinol + NAD(+) = all-trans-4-hydroxyretinal + NADH + H(+). It catalyses the reaction all-trans-4-oxoretinol + NAD(+) = all-trans-4-oxoretinal + NADH + H(+). Catalyzes the NAD-dependent oxidation of all-trans-retinol and its derivatives such as all-trans-4-hydroxyretinol and may participate in retinoid metabolism. In vitro can also catalyze the NADH-dependent reduction of all-trans-retinal and its derivatives such as all-trans-4-oxoretinal. Catalyzes in the oxidative direction with higher efficiency. Has the same affinity for all-trans-4-hydroxyretinol and all-trans-4-oxoretinal. The protein is All-trans-retinol dehydrogenase [NAD(+)] ADH1B of Pan troglodytes (Chimpanzee).